A 167-amino-acid chain; its full sequence is Small ribosomal subunit protein uS5 (167 aa).

An S5 DRBM domain is found at 12-75 (LQEKLVQVNR…EAARRNMIQV (64 aa)).

It belongs to the universal ribosomal protein uS5 family. Part of the 30S ribosomal subunit. Contacts proteins S4 and S8.

In terms of biological role, with S4 and S12 plays an important role in translational accuracy. Functionally, located at the back of the 30S subunit body where it stabilizes the conformation of the head with respect to the body. The protein is Small ribosomal subunit protein uS5 of Alcanivorax borkumensis (strain ATCC 700651 / DSM 11573 / NCIMB 13689 / SK2).